The following is a 284-amino-acid chain: Interferon antagonist OPG039 (284 aa).

6 ANK repeats span residues 29-58 (NGHS…LKNL), 60-89 (DNEF…DDSQ), 93-122 (KGNT…RLMF), 127-157 (GWKT…PFDL), 159-188 (ILLS…STNT), and 192-221 (LFIP…NIYS).

It belongs to the orthopoxvirus OPG039 family.

The protein localises to the host cytoplasm. Its subcellular location is the host nucleus. In terms of biological role, inhibits antiviral activity induced by type I interferons. Does not block signal transduction of IFN, but is important to counter the host antiviral state induced by a pre-treatment with IFN. Plays a role in the inhibition of host NF-kappa-B activation by preventing the acetylation of the RELA/p65 subunit of NF-kappaB. The polypeptide is Interferon antagonist OPG039 (OPG039) (Cynomys gunnisoni (Gunnison's prairie dog)).